The primary structure comprises 609 residues: Dihydroxy-acid dehydratase (609 aa).

Aspartate 82 lines the Mg(2+) pocket. Residue cysteine 123 participates in [2Fe-2S] cluster binding. 2 residues coordinate Mg(2+): aspartate 124 and lysine 125. Lysine 125 is subject to N6-carboxylysine. Cysteine 192 contributes to the [2Fe-2S] cluster binding site. Residue glutamate 489 coordinates Mg(2+). Serine 515 functions as the Proton acceptor in the catalytic mechanism.

The protein belongs to the IlvD/Edd family. In terms of assembly, homodimer. [2Fe-2S] cluster serves as cofactor. It depends on Mg(2+) as a cofactor.

It catalyses the reaction (2R)-2,3-dihydroxy-3-methylbutanoate = 3-methyl-2-oxobutanoate + H2O. The enzyme catalyses (2R,3R)-2,3-dihydroxy-3-methylpentanoate = (S)-3-methyl-2-oxopentanoate + H2O. It functions in the pathway amino-acid biosynthesis; L-isoleucine biosynthesis; L-isoleucine from 2-oxobutanoate: step 3/4. Its pathway is amino-acid biosynthesis; L-valine biosynthesis; L-valine from pyruvate: step 3/4. In terms of biological role, functions in the biosynthesis of branched-chain amino acids. Catalyzes the dehydration of (2R,3R)-2,3-dihydroxy-3-methylpentanoate (2,3-dihydroxy-3-methylvalerate) into 2-oxo-3-methylpentanoate (2-oxo-3-methylvalerate) and of (2R)-2,3-dihydroxy-3-methylbutanoate (2,3-dihydroxyisovalerate) into 2-oxo-3-methylbutanoate (2-oxoisovalerate), the penultimate precursor to L-isoleucine and L-valine, respectively. This Azobacteroides pseudotrichonymphae genomovar. CFP2 protein is Dihydroxy-acid dehydratase.